The following is a 307-amino-acid chain: D-alanine--D-alanine ligase (307 aa).

The region spanning 105–304 (KMLWKGFGLP…FEQLVVKILE (200 aa)) is the ATP-grasp domain. An ATP-binding site is contributed by 135–190 (VERLGLPLMVKPSREGSSVGLTKVNAVEELKNAVDLALTHDDTVLIEEWLSGIEMT). Mg(2+) is bound by residues aspartate 258, glutamate 271, and asparagine 273.

It belongs to the D-alanine--D-alanine ligase family. It depends on Mg(2+) as a cofactor. Mn(2+) is required as a cofactor.

It is found in the cytoplasm. The enzyme catalyses 2 D-alanine + ATP = D-alanyl-D-alanine + ADP + phosphate + H(+). The protein operates within cell wall biogenesis; peptidoglycan biosynthesis. Functionally, cell wall formation. The chain is D-alanine--D-alanine ligase from Mannheimia succiniciproducens (strain KCTC 0769BP / MBEL55E).